Reading from the N-terminus, the 312-residue chain is Olfactory receptor 1D5 (312 aa).

At 1–25 (MDGDNQSENSQFLLLGISESPEQQQ) the chain is on the extracellular side. Asn5 carries N-linked (GlcNAc...) asparagine glycosylation. A helical transmembrane segment spans residues 26–49 (ILFWMFLSMYLVTVLGNVLIILAI). The Cytoplasmic portion of the chain corresponds to 50–57 (SSDSRLHT). The helical transmembrane segment at 58–79 (PMYFFLANLSFTDLFFVTNTIP) threads the bilayer. The Extracellular segment spans residues 80–100 (KMLVNLQSQNKAISYAGCLTQ). Cysteines 97 and 189 form a disulfide. Residues 101 to 120 (LYFLVSLVTLDNLILAVMAY) traverse the membrane as a helical segment. The Cytoplasmic portion of the chain corresponds to 121–140 (DRYVAICCPLHYVTAMSPGL). A helical transmembrane segment spans residues 141–158 (CVLLLSLCWGLSVFYGLL). At 159–196 (LTLLLTRVTFCGPREIHYLFCDMYILLRLACSNTHIIH) the chain is on the extracellular side. A helical membrane pass occupies residues 197 to 220 (TVLVATGCFIFLTPLGFMTTSYVR). The Cytoplasmic segment spans residues 221 to 237 (IVRTILQIPSASKKYKA). Residues 238-260 (FSTCASHLGVVSLFYGTLAMVYL) traverse the membrane as a helical segment. Residues 261–271 (QPLHTYSMKDS) lie on the Extracellular side of the membrane. Residues 272–291 (VATVMYAVVTPMMNPFIHSL) traverse the membrane as a helical segment. The Cytoplasmic portion of the chain corresponds to 292 to 312 (RNKDMHGALGRVLRRLFQRPK).

The protein belongs to the G-protein coupled receptor 1 family.

It localises to the cell membrane. In terms of biological role, odorant receptor. The sequence is that of Olfactory receptor 1D5 (OR1D5) from Pan troglodytes (Chimpanzee).